An 87-amino-acid polypeptide reads, in one-letter code: UPF0335 protein Avi_3695 (87 aa).

Belongs to the UPF0335 family.

The protein is UPF0335 protein Avi_3695 of Allorhizobium ampelinum (strain ATCC BAA-846 / DSM 112012 / S4) (Agrobacterium vitis (strain S4)).